Reading from the N-terminus, the 283-residue chain is Dihydropteroate synthase type-1 (283 aa).

The Pterin-binding domain maps to 6–262; the sequence is VTVFGILNLT…APGDLRSAIT (257 aa). Asn13 is a Mg(2+) binding site. Residues Asp86, Asn105, Asp177, Lys216, and 250–252 each bind (7,8-dihydropterin-6-yl)methyl diphosphate; that span reads RTH.

It belongs to the DHPS family. In terms of assembly, homodimer or homotrimer. Mg(2+) serves as cofactor.

It catalyses the reaction (7,8-dihydropterin-6-yl)methyl diphosphate + 4-aminobenzoate = 7,8-dihydropteroate + diphosphate. The protein operates within cofactor biosynthesis; tetrahydrofolate biosynthesis; 7,8-dihydrofolate from 2-amino-4-hydroxy-6-hydroxymethyl-7,8-dihydropteridine diphosphate and 4-aminobenzoate: step 1/2. Functionally, catalyzes the condensation of para-aminobenzoate (pABA) with 6-hydroxymethyl-7,8-dihydropterin diphosphate (DHPt-PP) to form 7,8-dihydropteroate (H2Pte), the immediate precursor of folate derivatives. Implicated in resistance to sulfonamide. This chain is Dihydropteroate synthase type-1 (sulI), found in Mycolicibacterium fortuitum (Mycobacterium fortuitum).